The sequence spans 214 residues: ATP-dependent dethiobiotin synthetase BioD (214 aa).

10-15 (GIGKTY) contacts ATP. Threonine 14 is a Mg(2+) binding site. The active site involves lysine 35. Threonine 39 is a substrate binding site. Residues aspartate 44, 109–112 (EGAG), and 169–170 (NC) each bind ATP. Mg(2+) is bound by residues aspartate 44 and glutamate 109.

It belongs to the dethiobiotin synthetase family. Homodimer. The cofactor is Mg(2+).

It localises to the cytoplasm. The catalysed reaction is (7R,8S)-7,8-diammoniononanoate + CO2 + ATP = (4R,5S)-dethiobiotin + ADP + phosphate + 3 H(+). It participates in cofactor biosynthesis; biotin biosynthesis; biotin from 7,8-diaminononanoate: step 1/2. Catalyzes a mechanistically unusual reaction, the ATP-dependent insertion of CO2 between the N7 and N8 nitrogen atoms of 7,8-diaminopelargonic acid (DAPA, also called 7,8-diammoniononanoate) to form a ureido ring. This is ATP-dependent dethiobiotin synthetase BioD from Methanocaldococcus jannaschii (strain ATCC 43067 / DSM 2661 / JAL-1 / JCM 10045 / NBRC 100440) (Methanococcus jannaschii).